We begin with the raw amino-acid sequence, 2923 residues long: Cadherin EGF LAG seven-pass G-type receptor 2 (2923 aa).

An N-terminal signal peptide occupies residues 1–31 (MRSPATGVPLPTPPPPLLLLLLLLLPPPLLG). The Extracellular segment spans residues 32–2380 (DQVGPCRSLG…GEILPLKTLT (2349 aa)). The tract at residues 154–198 (PGLRAGERSPEESLGGRRKRNVNTAPQFQPPSYQATVPENQPAGT) is disordered. Residues 158–168 (AGERSPEESLG) are compositionally biased toward basic and acidic residues. Polar residues predominate over residues 175 to 196 (VNTAPQFQPPSYQATVPENQPA). 9 consecutive Cadherin domains span residues 182-289 (QPPS…DPVF), 290-399 (EQQE…APQF), 400-505 (SEKR…APIF), 506-610 (VSTP…NPTF), 611-712 (TQPE…RPVF), 713-815 (QSSH…APQF), 816-921 (LRDS…PPVF), 922-1023 (EQDE…PPVL), and 1028-1146 (ILFN…SPLL). 3 N-linked (GlcNAc...) asparagine glycosylation sites follow: asparagine 486, asparagine 557, and asparagine 701. Asparagine 1036, asparagine 1076, asparagine 1182, and asparagine 1212 each carry an N-linked (GlcNAc...) asparagine glycan. Residues 1228 to 1286 (DDNICLREPCENYMRCVSVLRFDSSAPFIASSSVLFRPIHPVGGLRCRCPPGFTGDYCE) form the EGF-like 1; calcium-binding domain. Cystine bridges form between cysteine 1232/cysteine 1243, cysteine 1237/cysteine 1274, cysteine 1276/cysteine 1285, cysteine 1292/cysteine 1303, cysteine 1297/cysteine 1312, cysteine 1314/cysteine 1323, cysteine 1332/cysteine 1343, cysteine 1337/cysteine 1353, and cysteine 1355/cysteine 1365. In terms of domain architecture, EGF-like 2; calcium-binding spans 1288 to 1324 (EVDLCYSRPCGPHGRCRSREGGYTCLCRDGYTGEHCE). One can recognise an EGF-like 3; calcium-binding domain in the interval 1328–1366 (RSGRCTPGVCKNGGTCVNLLVGGFKCDCPSGDFEKPYCQ). Residues 1367–1571 (VTTRSFPAHS…IANNGTVPGC (205 aa)) form the Laminin G-like 1 domain. Residues asparagine 1501 and asparagine 1565 are each glycosylated (N-linked (GlcNAc...) asparagine). Intrachain disulfides connect cysteine 1545/cysteine 1571, cysteine 1578/cysteine 1589, cysteine 1583/cysteine 1598, and cysteine 1600/cysteine 1609. Residues 1574–1610 (KKNVCDSNTCHNGGTCVNQWDAFSCECPLGFGGKSCA) form the EGF-like 4; calcium-binding domain. A (3R)-3-hydroxyasparagine modification is found at asparagine 1591. One can recognise a Laminin G-like 2 domain in the interval 1614–1791 (ANPQHFLGSS…GESINVEQGC (178 aa)). An N-linked (GlcNAc...) asparagine glycan is attached at asparagine 1741. 14 cysteine pairs are disulfide-bonded: cysteine 1761-cysteine 1791, cysteine 1797-cysteine 1808, cysteine 1802-cysteine 1817, cysteine 1819-cysteine 1828, cysteine 1832-cysteine 1843, cysteine 1837-cysteine 1855, cysteine 1857-cysteine 1866, cysteine 1887-cysteine 1899, cysteine 1889-cysteine 1906, cysteine 1908-cysteine 1921, cysteine 1924-cysteine 1936, cysteine 1926-cysteine 1943, cysteine 1945-cysteine 1954, and cysteine 1957-cysteine 1969. The EGF-like 5; calcium-binding domain maps to 1793 to 1828 (LPDPCDSNPCPANSYCSNDWDSYSCSCDPGYYGDNC). (3R)-3-hydroxyasparagine is present on asparagine 1810. The N-linked (GlcNAc...) asparagine glycan is linked to asparagine 1827. In terms of domain architecture, EGF-like 6; calcium-binding spans 1829 to 1867 (TNVCDLNPCEHQSVCTRKPSAPHGYTCECPPNYLGPYCE). Residues 1883–1922 (TCGPCNCDVSKGFDPDCNKTSGECHCKENHYRPPGSPTCL) enclose the EGF-like 7; calcium-binding domain. The N-linked (GlcNAc...) asparagine glycan is linked to asparagine 1900. The region spanning 1924–1971 (CDCYPTGSLSRVCDPEDGQCPCKPGVIGRQCDRCDNPFAEVTTNGCEV) is the Laminin EGF-like domain. N-linked (GlcNAc...) asparagine glycans are attached at residues asparagine 2024, asparagine 2043, and asparagine 2061. The 171-residue stretch at 2199–2369 (ETTVILPESV…AVLMDVSRRE (171 aa)) folds into the GAIN-B domain. Positions 2213-2238 (PPVVRPAGPGEAQEPEELARRQRRHP) are disordered. 2 disulfides stabilise this stretch: cysteine 2319–cysteine 2351 and cysteine 2339–cysteine 2353. Residues 2319–2369 (CVFWNHSILVSGTGGWSARGCEVVFRNESHVSCQCNHMTSFAVLMDVSRRE) form a GPS region. N-linked (GlcNAc...) asparagine glycans are attached at residues asparagine 2323 and asparagine 2345. The helical transmembrane segment at 2381–2401 (YVALGVTLAALLLTFFFLTLL) threads the bilayer. Over 2402–2416 (RILRSNQHGIRRNLT) the chain is Cytoplasmic. The helical transmembrane segment at 2417-2437 (AALGLAQLVFLLGINQADLPF) threads the bilayer. Alanine 2438 is a topological domain (extracellular). The chain crosses the membrane as a helical span at residues 2439-2459 (CTVIAILLHFLYLCTFSWALL). Residues 2460-2480 (EALHLYRALTEVRDVNTGPMR) are Cytoplasmic-facing. The helical transmembrane segment at 2481-2501 (FYYMLGWGVPAFITGLAVGLD) threads the bilayer. The Extracellular segment spans residues 2502–2519 (PEGYGNPDFCWLSIYDTL). The helical transmembrane segment at 2520–2540 (IWSFAGPVAFAVSMSVFLYIL) threads the bilayer. At 2541–2560 (AARASCAAQRQGFEKKGPVS) the chain is on the cytoplasmic side. Residues 2561–2581 (GLQPSFAVLLLLSATWLLALL) form a helical membrane-spanning segment. At 2582 to 2591 (SVNSDTLLFH) the chain is on the extracellular side. The helical transmembrane segment at 2592 to 2612 (YLFATCNCIQGPFIFLSYVVL) threads the bilayer. Residues 2613-2923 (SKEVRKALKL…SEFLFFNFLH (311 aa)) are Cytoplasmic-facing. Disordered regions lie at residues 2688 to 2838 (SALN…HKGI) and 2854 to 2888 (LRLPLEQCTGSSRGSSASEGSRGGPPPRPPPRQSL). Composition is skewed to acidic residues over residues 2718–2730 (TDSDSDLSLEDDQ) and 2742–2753 (SEEEEEEEEEEA). Residues 2807–2819 (PEERLRENGDALS) are compositionally biased toward basic and acidic residues. A compositionally biased stretch (low complexity) spans 2863 to 2873 (GSSRGSSASEG).

This sequence belongs to the G-protein coupled receptor 2 family. LN-TM7 subfamily. In terms of assembly, heterodimer of 2 chains generated by proteolytic processing; the large extracellular N-terminal fragment and the membrane-bound C-terminal fragment predominantly remain associated and non-covalently linked. In terms of processing, the iron and 2-oxoglutarate dependent 3-hydroxylation of aspartate and asparagine is (R) stereospecific within EGF domains. Autoproteolytically processed at the GPS region of the GAIN-B domain; this cleavage modulates receptor activity. In terms of tissue distribution, highest expression in brain and testis.

The protein localises to the cell membrane. Functionally, receptor that may have an important role in cell/cell signaling during nervous system formation. This chain is Cadherin EGF LAG seven-pass G-type receptor 2, found in Homo sapiens (Human).